The following is a 414-amino-acid chain: Sarcosine oxidase subunit beta (414 aa).

Residues G42, H43, E64, N72, T77, and I79 each coordinate FAD. H183 carries the tele-8alpha-FMN histidine modification. FAD-binding residues include V207, G364, G367, and K369.

It belongs to the SoxB family. As to quaternary structure, heterotetramer composed of subunits alpha (SoxA), beta (SoxB), gamma (SoxG) and delta (SoxD). FAD is required as a cofactor. Requires FMN as cofactor.

The protein localises to the cytoplasm. The enzyme catalyses sarcosine + (6S)-5,6,7,8-tetrahydrofolate + O2 = (6R)-5,10-methylene-5,6,7,8-tetrahydrofolate + glycine + H2O2. The catalysed reaction is sarcosine + O2 + H2O = formaldehyde + glycine + H2O2. In terms of biological role, in the presence of tetrahydrofolate, catalyzes the oxidative demethylation of sarcosine to yield glycine, 5,10-methylenetetrahydrofolate and hydrogen peroxide. In the absence of tetrahydrofolate, catalyzes the oxidative demethylation of sarcosine to yield glycine, formaldehyde and hydrogen peroxide. The chain is Sarcosine oxidase subunit beta (soxB) from Rhodobacter capsulatus (strain ATCC BAA-309 / NBRC 16581 / SB1003).